Here is a 108-residue protein sequence, read N- to C-terminus: Peptidyl-prolyl cis-trans isomerase FKBP1C (108 aa).

In terms of domain architecture, PPIase FKBP-type spans 20 to 108 (SQTCVMHYTG…VFDVELLKLE (89 aa)).

The protein belongs to the FKBP-type PPIase family. FKBP1 subfamily.

It carries out the reaction [protein]-peptidylproline (omega=180) = [protein]-peptidylproline (omega=0). In terms of biological role, catalyzes the cis-trans isomerization of proline imidic peptide bonds in oligopeptides. This Homo sapiens (Human) protein is Peptidyl-prolyl cis-trans isomerase FKBP1C.